Here is a 183-residue protein sequence, read N- to C-terminus: DELTA-miturgitoxin-Cp1b (183 aa).

An N-terminal signal peptide occupies residues 1-20 (MKFSLFFSVFFLAVLHACLS). The propeptide occupies 21-47 (ESEIDLEDEEHFMSSDSFLSEIQDESR). The Processing quadruplet motif signature appears at 44–47 (DESR). 8 cysteine pairs are disulfide-bonded: Cys-51–Cys-66, Cys-58–Cys-75, Cys-65–Cys-88, Cys-77–Cys-86, Cys-115–Cys-130, Cys-122–Cys-139, Cys-129–Cys-157, and Cys-141–Cys-155. The predicted alpha-helix stretch occupies residues 164-177 (QAIEGALRIAKKLI). Position 181 is a tryptophan amide (Trp-181).

This sequence belongs to the neurotoxin 19 (CSTX) family. Double-CSTX subfamily. In terms of processing, cleavage of the propeptide depends on the processing quadruplet motif (XXXR, with at least one of X being E). Expressed by the venom gland.

It localises to the secreted. Its subcellular location is the target cell membrane. Its function is as follows. Spider venom toxin that exhibits cytolytic activity by forming an alpha-helix across the membrane. Lethal to insect larvae. Causes instant paralysis and death in the larvae of the flesh fly (S.carnaria) at doses of 20 ug/g, at doses of less than 10 ug/g causes reversible paralysis. Has cytolytic activity against insect Sf9 cells. Causes stable and irreversible depolarization of fly muscle fibers, leading to contracture at higher toxin concentrations. Destabilizes membranes. This Cheiracanthium punctorium (Yellow sac spider) protein is DELTA-miturgitoxin-Cp1b.